The sequence spans 59 residues: Potassium channel toxin alpha-KTx 4.7 (59 aa).

The first 22 residues, 1–22 (MKAFYGILIIFILISMLDLSQQ), serve as a signal peptide directing secretion. Cystine bridges form between cysteine 29–cysteine 50, cysteine 35–cysteine 55, and cysteine 39–cysteine 57. An interaction with Ca(2+)-activated K(+) channels region spans residues 48–55 (GKCMNGKC).

It belongs to the short scorpion toxin superfamily. Potassium channel inhibitor family. Alpha-KTx 04 subfamily. In terms of tissue distribution, expressed by the venom gland.

The protein localises to the secreted. Functionally, potently blocks Kv1.1/KCNA1 (85%), Kv1.2/KCNA2 (91%), Kv1.3/KCNA3 (89%), Kv1.6/KCNA6 (94%), and Shaker (97%). The chain is Potassium channel toxin alpha-KTx 4.7 from Tityus stigmurus (Brazilian scorpion).